The primary structure comprises 205 residues: Holliday junction branch migration complex subunit RuvA (205 aa).

Residues 1 to 64 (MIGKLKGTID…EDQLRLFGFL (64 aa)) are domain I. The interval 65–143 (SALEREWFRL…AFAGEMSASI (79 aa)) is domain II. The segment at 144-153 (GLKQELGEGV) is flexible linker. A domain III region spans residues 153 to 205 (VAAAPVSDAVSALTNLGYSRDQAANAVAAALKNGGEGGDSAKLIRLGLKELAR).

Belongs to the RuvA family. Homotetramer. Forms an RuvA(8)-RuvB(12)-Holliday junction (HJ) complex. HJ DNA is sandwiched between 2 RuvA tetramers; dsDNA enters through RuvA and exits via RuvB. An RuvB hexamer assembles on each DNA strand where it exits the tetramer. Each RuvB hexamer is contacted by two RuvA subunits (via domain III) on 2 adjacent RuvB subunits; this complex drives branch migration. In the full resolvosome a probable DNA-RuvA(4)-RuvB(12)-RuvC(2) complex forms which resolves the HJ.

It is found in the cytoplasm. In terms of biological role, the RuvA-RuvB-RuvC complex processes Holliday junction (HJ) DNA during genetic recombination and DNA repair, while the RuvA-RuvB complex plays an important role in the rescue of blocked DNA replication forks via replication fork reversal (RFR). RuvA specifically binds to HJ cruciform DNA, conferring on it an open structure. The RuvB hexamer acts as an ATP-dependent pump, pulling dsDNA into and through the RuvAB complex. HJ branch migration allows RuvC to scan DNA until it finds its consensus sequence, where it cleaves and resolves the cruciform DNA. In Sinorhizobium fredii (strain NBRC 101917 / NGR234), this protein is Holliday junction branch migration complex subunit RuvA.